The sequence spans 205 residues: Outer-membrane lipoprotein LolB (205 aa).

The N-terminal stretch at 1–17 is a signal peptide; it reads MFLRHCITFTLIALLAG. Cys-18 carries N-palmitoyl cysteine lipidation. Cys-18 is lipidated: S-diacylglycerol cysteine.

This sequence belongs to the LolB family. Monomer.

The protein resides in the cell outer membrane. Its function is as follows. Plays a critical role in the incorporation of lipoproteins in the outer membrane after they are released by the LolA protein. This is Outer-membrane lipoprotein LolB from Pseudomonas putida (strain ATCC 47054 / DSM 6125 / CFBP 8728 / NCIMB 11950 / KT2440).